Reading from the N-terminus, the 188-residue chain is dCTP deaminase (188 aa).

109–114 (KSTYAR) lines the dCTP pocket. The active-site Proton donor/acceptor is the glutamate 135. 3 residues coordinate dCTP: glutamine 154, tyrosine 168, and glutamine 178.

This sequence belongs to the dCTP deaminase family. As to quaternary structure, homotrimer.

It catalyses the reaction dCTP + H2O + H(+) = dUTP + NH4(+). It participates in pyrimidine metabolism; dUMP biosynthesis; dUMP from dCTP (dUTP route): step 1/2. In terms of biological role, catalyzes the deamination of dCTP to dUTP. In Helicobacter pylori (strain J99 / ATCC 700824) (Campylobacter pylori J99), this protein is dCTP deaminase.